A 339-amino-acid chain; its full sequence is MAVFTELFWITLKIMALVVPLMLAVAYLTYAERRVIGAMQDRRGPNRVGYQGLLQPIADALKLVMKEISIPSNANRVLFVIAPLLAIMPALAAWAVIPVAEGWAIADINAGLLYILAMTSLGVYGIIIAGWASNSKYALLGTLRASAQVVSYEIAMGFALVGVLMAAGSMNLGQIIQAQAGGIFHWFWLPLLPLFLVYWISGVAETNRAPFDVAEGESEIVAGFHVEYSGTSFAVFFLAEYANMILISAVAAVMFLGGWYSPFHGWPILGPMLDWVPGVVWFMLKTAFFMFCYLWFRATFPRYRYDQIMRLGWKVLIPVTVVWLIVLTIFIVTGFGPWF.

8 consecutive transmembrane segments (helical) span residues 7–27, 77–97, 112–132, 149–169, 180–200, 235–255, 276–296, and 315–335; these read LFWI…AVAY, VLFV…WAVI, LLYI…AGWA, VVSY…AAGS, AGGI…VYWI, VFFL…AVMF, VPGV…YLWF, and VLIP…VTGF.

This sequence belongs to the complex I subunit 1 family. In terms of assembly, NDH-1 is composed of 14 different subunits. Subunits NuoA, H, J, K, L, M, N constitute the membrane sector of the complex.

Its subcellular location is the cell inner membrane. The catalysed reaction is a quinone + NADH + 5 H(+)(in) = a quinol + NAD(+) + 4 H(+)(out). Functionally, NDH-1 shuttles electrons from NADH, via FMN and iron-sulfur (Fe-S) centers, to quinones in the respiratory chain. The immediate electron acceptor for the enzyme in this species is believed to be ubiquinone. Couples the redox reaction to proton translocation (for every two electrons transferred, four hydrogen ions are translocated across the cytoplasmic membrane), and thus conserves the redox energy in a proton gradient. This subunit may bind ubiquinone. This is NADH-quinone oxidoreductase subunit H from Alkalilimnicola ehrlichii (strain ATCC BAA-1101 / DSM 17681 / MLHE-1).